A 434-amino-acid polypeptide reads, in one-letter code: D-amino acid dehydrogenase (434 aa).

3–17 (VLVLGSGVIGTASAY) contacts FAD.

Belongs to the DadA oxidoreductase family. It depends on FAD as a cofactor.

It catalyses the reaction a D-alpha-amino acid + A + H2O = a 2-oxocarboxylate + AH2 + NH4(+). Its pathway is amino-acid degradation; D-alanine degradation; NH(3) and pyruvate from D-alanine: step 1/1. Oxidative deamination of D-amino acids. This chain is D-amino acid dehydrogenase, found in Pseudomonas putida (strain ATCC 700007 / DSM 6899 / JCM 31910 / BCRC 17059 / LMG 24140 / F1).